Consider the following 116-residue polypeptide: Large ribosomal subunit protein bL17 (116 aa).

It belongs to the bacterial ribosomal protein bL17 family. In terms of assembly, part of the 50S ribosomal subunit. Contacts protein L32.

The chain is Large ribosomal subunit protein bL17 from Chloroflexus aggregans (strain MD-66 / DSM 9485).